The following is a 413-amino-acid chain: Probable protein S-acyltransferase 3 (413 aa).

A run of 2 helical transmembrane segments spans residues 65-85 (LTSF…LVWI) and 96-116 (VLAS…LTSA). In terms of domain architecture, DHHC spans 171-221 (KFCDTCLLYRPPRASHCSICNNCVQRFDHHCPWVGQCIARRNYPFFICFIS). C201 acts as the S-palmitoyl cysteine intermediate in catalysis. A run of 2 helical transmembrane segments spans residues 216 to 236 (FICF…FSWI) and 255 to 275 (SVIL…LTIF). Residues 364-413 (RDSPRKLPLPTRNLDDIKDISDNYDRSTTTREDASDRDPSFFSSQLDLPK) form a disordered region. The segment covering 376–402 (NLDDIKDISDNYDRSTTTREDASDRDP) has biased composition (basic and acidic residues). Residues 404–413 (FFSSQLDLPK) show a composition bias toward polar residues.

It belongs to the DHHC palmitoyltransferase family. Expressed in flowers and pollen.

The protein resides in the endoplasmic reticulum membrane. Its subcellular location is the cytoplasmic vesicle membrane. It carries out the reaction L-cysteinyl-[protein] + hexadecanoyl-CoA = S-hexadecanoyl-L-cysteinyl-[protein] + CoA. Palmitoyl acyltransferase. This is Probable protein S-acyltransferase 3 (PAT03) from Arabidopsis thaliana (Mouse-ear cress).